We begin with the raw amino-acid sequence, 195 residues long: L-rhamnose-binding lectin CSL3 (195 aa).

SUEL-type lectin domains lie at 1-95 (AISI…YSCV) and 105-195 (ICEG…YTCD).

Its function is as follows. L-rhamnose binding lectin. Has hemagglutinating activity towards rabbit erythrocytes, human type A erythrocytes, human type B erythrocytes, human type O erythrocytes and sheep erythrocytes. Hemagglutinating activity is inhibited by smooth-type lipopolysaccharide (LPS) from S.flexneri 1A, A.salmonicida and E.coli K12, but not by rough-type LPS from S.flexneri, E.coli K12 and E.coli EH100. Agglutinates E.coli K12 and B.subtilis. This chain is L-rhamnose-binding lectin CSL3, found in Oncorhynchus keta (Chum salmon).